Consider the following 221-residue polypeptide: GTP-binding nuclear protein Ran/TC4 (221 aa).

The Small GTPase Ran-type domain occupies 10–174 (DYPSFKLVIV…LYLARKLAGD (165 aa)). Position 21–28 (21–28 (DGGTGKTT)) interacts with GTP. Positions 40–48 (KKYEPTIGV) are switch-I. GTP contacts are provided by residues Gly71, 125-128 (NKVD), and 153-155 (SAK). A switch-II region spans residues 71–87 (GQEKFGGLRDGYYIHGQ).

The protein belongs to the small GTPase superfamily. Ran family. As to quaternary structure, found in a nuclear export complex with RanGTP, exportin and pre-miRNA.

It localises to the nucleus. Its function is as follows. GTP-binding protein involved in nucleocytoplasmic transport. Required for the import of protein into the nucleus and also for RNA export. Involved in chromatin condensation and control of cell cycle. The sequence is that of GTP-binding nuclear protein Ran/TC4 from Vicia faba (Broad bean).